The primary structure comprises 141 residues: Acetyltransferase YE1169 (141 aa).

The 141-residue stretch at 1–141 folds into the N-acetyltransferase domain; it reads MEIRVFQQSD…GKRLIVDQEY (141 aa).

The protein belongs to the acetyltransferase family. YpeA subfamily.

The polypeptide is Acetyltransferase YE1169 (Yersinia enterocolitica serotype O:8 / biotype 1B (strain NCTC 13174 / 8081)).